The chain runs to 83 residues: Bowman-Birk type proteinase inhibitor C-II (83 aa).

A propeptide spanning residues 1–7 (MELNLFK) is cleaved from the precursor. 7 disulfide bridges follow: Cys-21–Cys-75, Cys-22–Cys-37, Cys-25–Cys-71, Cys-27–Cys-35, Cys-45–Cys-52, Cys-49–Cys-64, and Cys-54–Cys-62.

Belongs to the Bowman-Birk serine protease inhibitor family.

The polypeptide is Bowman-Birk type proteinase inhibitor C-II (Glycine max (Soybean)).